We begin with the raw amino-acid sequence, 114 residues long: Ribonuclease P protein component (114 aa).

The protein belongs to the RnpA family. In terms of assembly, consists of a catalytic RNA component (M1 or rnpB) and a protein subunit.

It carries out the reaction Endonucleolytic cleavage of RNA, removing 5'-extranucleotides from tRNA precursor.. In terms of biological role, RNaseP catalyzes the removal of the 5'-leader sequence from pre-tRNA to produce the mature 5'-terminus. It can also cleave other RNA substrates such as 4.5S RNA. The protein component plays an auxiliary but essential role in vivo by binding to the 5'-leader sequence and broadening the substrate specificity of the ribozyme. This is Ribonuclease P protein component from Limosilactobacillus fermentum (strain NBRC 3956 / LMG 18251) (Lactobacillus fermentum).